The following is a 521-amino-acid chain: Medium/long-chain-fatty-acid--[acyl-carrier-protein] ligase MbtM (521 aa).

The segment at 146-172 (RRCPEPPAPHANPAILQGTAGSTGTPK) is disordered.

Belongs to the ATP-dependent AMP-binding enzyme family.

The catalysed reaction is a long-chain fatty acid + holo-[ACP] + ATP = a long-chain fatty acyl-[ACP] + AMP + diphosphate. It carries out the reaction a medium-chain fatty acid + holo-[ACP] + ATP = a medium-chain fatty acyl-[ACP] + AMP + diphosphate. It functions in the pathway siderophore biosynthesis; mycobactin biosynthesis. Activates lipidic moieties required for mycobactin biosynthesis. Converts medium- to long-chain aliphatic fatty acids into acyl adenylate, which is further transferred on to the phosphopantetheine arm of the carrier protein MbtL. This chain is Medium/long-chain-fatty-acid--[acyl-carrier-protein] ligase MbtM (mbtM), found in Mycolicibacterium paratuberculosis (strain ATCC BAA-968 / K-10) (Mycobacterium paratuberculosis).